The primary structure comprises 197 residues: DnaJ homolog subfamily C member 5 (197 aa).

The J domain occupies 13 to 82 (GESLYHVLGL…RNIYDKYGSL (70 aa)). Positions 153 to 197 (EDLEAQMQSDERDTEGPVLVQPASATETTQLTSDSHASYHTDGFN) are disordered. Polar residues predominate over residues 175-197 (ASATETTQLTSDSHASYHTDGFN).

Post-translationally, palmitoylated. Palmitoylation occurs probably in the cysteine-rich domain and regulates DNAJC5 stable membrane attachment.

It localises to the cytoplasm. Its subcellular location is the cytosol. The protein localises to the membrane. The protein resides in the cytoplasmic vesicle. It is found in the secretory vesicle. It localises to the chromaffin granule membrane. Its subcellular location is the melanosome. The protein localises to the cell membrane. Its function is as follows. May have an important role in presynaptic function. May be involved in calcium-dependent neurotransmitter release at nerve endings. This chain is DnaJ homolog subfamily C member 5, found in Xenopus laevis (African clawed frog).